The sequence spans 387 residues: Formate-dependent phosphoribosylglycinamide formyltransferase (387 aa).

N(1)-(5-phospho-beta-D-ribosyl)glycinamide-binding positions include 12–13 (EL) and Glu72. ATP contacts are provided by residues Arg104, Lys145, 150–155 (SSGKGQ), 185–188 (EEFI), and Glu193. The ATP-grasp domain occupies 109-300 (DLAARELGLA…EFELHLRAVL (192 aa)). The Mg(2+) site is built by Glu258 and Glu270. N(1)-(5-phospho-beta-D-ribosyl)glycinamide-binding positions include Asp277, Lys347, and 354–355 (RR).

It belongs to the PurK/PurT family. Homodimer.

The enzyme catalyses N(1)-(5-phospho-beta-D-ribosyl)glycinamide + formate + ATP = N(2)-formyl-N(1)-(5-phospho-beta-D-ribosyl)glycinamide + ADP + phosphate + H(+). Its pathway is purine metabolism; IMP biosynthesis via de novo pathway; N(2)-formyl-N(1)-(5-phospho-D-ribosyl)glycinamide from N(1)-(5-phospho-D-ribosyl)glycinamide (formate route): step 1/1. In terms of biological role, involved in the de novo purine biosynthesis. Catalyzes the transfer of formate to 5-phospho-ribosyl-glycinamide (GAR), producing 5-phospho-ribosyl-N-formylglycinamide (FGAR). Formate is provided by PurU via hydrolysis of 10-formyl-tetrahydrofolate. The sequence is that of Formate-dependent phosphoribosylglycinamide formyltransferase from Anaeromyxobacter dehalogenans (strain 2CP-C).